Consider the following 118-residue polypeptide: Large ribosomal subunit protein bL20 (118 aa).

The protein belongs to the bacterial ribosomal protein bL20 family.

Binds directly to 23S ribosomal RNA and is necessary for the in vitro assembly process of the 50S ribosomal subunit. It is not involved in the protein synthesizing functions of that subunit. The polypeptide is Large ribosomal subunit protein bL20 (Pseudomonas entomophila (strain L48)).